A 47-amino-acid chain; its full sequence is Gas vesicle protein A (47 aa).

This sequence belongs to the gas vesicle GvpA family. The gas vesicle shell is 2 nm thick and consists of a single layer of this protein. It forms helical ribs nearly perpendicular to the long axis of the vesicle.

It is found in the gas vesicle shell. Functionally, gas vesicles are hollow, gas filled proteinaceous nanostructures found in some microorganisms. During planktonic growth they allow positioning of the organism at a favorable depth for light or nutrient acquisition. GvpA forms the protein shell. This chain is Gas vesicle protein A, found in Dactylococcopsis salina (Myxobaktron salinum).